We begin with the raw amino-acid sequence, 836 residues long: Protein translocase subunit SecA (836 aa).

ATP is bound by residues Q85, 103–107 (GEGKT), and D492. Positions 786–817 (REQVAKETSTNQGGDDTLKKQPIKKEPKIGRN) are disordered. Positions 801-816 (DTLKKQPIKKEPKIGR) are enriched in basic and acidic residues. C820, C822, C831, and C832 together coordinate Zn(2+).

Belongs to the SecA family. Monomer and homodimer. Part of the essential Sec protein translocation apparatus which comprises SecA, SecYEG and auxiliary proteins SecDF. Other proteins may also be involved. Zn(2+) serves as cofactor.

Its subcellular location is the cell membrane. The protein resides in the cytoplasm. It catalyses the reaction ATP + H2O + cellular proteinSide 1 = ADP + phosphate + cellular proteinSide 2.. Its function is as follows. Part of the Sec protein translocase complex. Interacts with the SecYEG preprotein conducting channel. Has a central role in coupling the hydrolysis of ATP to the transfer of proteins into and across the cell membrane, serving as an ATP-driven molecular motor driving the stepwise translocation of polypeptide chains across the membrane. This is Protein translocase subunit SecA from Clostridium tetani (strain Massachusetts / E88).